The chain runs to 476 residues: Bifunctional protein HldE (476 aa).

Residues 1–318 (MKVTLPDFRR…ENAIRGRAET (318 aa)) are ribokinase. Residue 195-198 (NLSE) coordinates ATP. The active site involves D264. Positions 344–476 (MTNGIFDILH…IIQSIKNGRG (133 aa)) are cytidylyltransferase.

It in the N-terminal section; belongs to the carbohydrate kinase PfkB family. This sequence in the C-terminal section; belongs to the cytidylyltransferase family. In terms of assembly, homodimer.

The catalysed reaction is D-glycero-beta-D-manno-heptose 7-phosphate + ATP = D-glycero-beta-D-manno-heptose 1,7-bisphosphate + ADP + H(+). The enzyme catalyses D-glycero-beta-D-manno-heptose 1-phosphate + ATP + H(+) = ADP-D-glycero-beta-D-manno-heptose + diphosphate. It participates in nucleotide-sugar biosynthesis; ADP-L-glycero-beta-D-manno-heptose biosynthesis; ADP-L-glycero-beta-D-manno-heptose from D-glycero-beta-D-manno-heptose 7-phosphate: step 1/4. Its pathway is nucleotide-sugar biosynthesis; ADP-L-glycero-beta-D-manno-heptose biosynthesis; ADP-L-glycero-beta-D-manno-heptose from D-glycero-beta-D-manno-heptose 7-phosphate: step 3/4. In terms of biological role, catalyzes the phosphorylation of D-glycero-D-manno-heptose 7-phosphate at the C-1 position to selectively form D-glycero-beta-D-manno-heptose-1,7-bisphosphate. Catalyzes the ADP transfer from ATP to D-glycero-beta-D-manno-heptose 1-phosphate, yielding ADP-D-glycero-beta-D-manno-heptose. This is Bifunctional protein HldE from Yersinia pestis bv. Antiqua (strain Antiqua).